A 72-amino-acid chain; its full sequence is Large ribosomal subunit protein uL29 (72 aa).

This sequence belongs to the universal ribosomal protein uL29 family.

This Chlamydia muridarum (strain MoPn / Nigg) protein is Large ribosomal subunit protein uL29 (rpmC).